We begin with the raw amino-acid sequence, 239 residues long: MFKRSGSLSLALMSSFCSSSLATPLSSAEFDHVARKCAPSVATSTLAAIAKVESRFDPLAIHDNTTGETLHWQDHTQATQVVRHRLDARHSLDVGLMQINSRNFSMLGLTPDGALKACPSLSAAANMLKSRYAGGETIDEKQIALRRAISAYNTGNFIRGFANGYVRKVETAAQSLVPALIEPPQDDHKALKSEDTWDVWGSYQRRSQEDGVGGSIAPQPPDQDNGKSADDNQVLFDLY.

An N-terminal signal peptide occupies residues 1-28 (MFKRSGSLSLALMSSFCSSSLATPLSSA). Positions 202–232 (SYQRRSQEDGVGGSIAPQPPDQDNGKSADDN) are disordered.

Belongs to the virb1 family.

Its function is as follows. VirB proteins are suggested to act at the bacterial surface and there play an important role in directing T-DNA transfer to plant cells. The polypeptide is Protein virB1 (virB1) (Agrobacterium tumefaciens (strain 15955)).